A 1030-amino-acid polypeptide reads, in one-letter code: Carbamoyl phosphate synthase arginine-specific large chain (1030 aa).

Residues 1–401 are carboxyphosphate synthetic domain; it reads MPKDTSISSI…AIQKAAASLE (401 aa). 12 residues coordinate ATP: arginine 129, arginine 169, glycine 175, glycine 176, lysine 208, isoleucine 210, glutamate 215, glycine 241, valine 242, histidine 243, glutamine 284, and glutamate 298. Residues 133-327 enclose the ATP-grasp 1 domain; sequence RSLMNELKQP…IAKMAAKLAV (195 aa). Positions 284, 298, and 300 each coordinate Mg(2+). Mn(2+)-binding residues include glutamine 284, glutamate 298, and asparagine 300. Positions 402-548 are oligomerization domain; sequence LKNIGTHLPE…YSTYFGETDG (147 aa). Residues 549-928 form a carbamoyl phosphate synthetic domain region; that stretch reads DISRKEKKRA…ALKKIYTRVW (380 aa). Residues 675-863 enclose the ATP-grasp 2 domain; it reads YQLLDELGLK…MIPLATRLLA (189 aa). The ATP site is built by arginine 711, glutamine 748, valine 750, glutamate 754, glycine 779, valine 780, histidine 781, serine 782, glutamine 822, and glutamate 834. 3 residues coordinate Mg(2+): glutamine 822, glutamate 834, and asparagine 836. The Mn(2+) site is built by glutamine 822, glutamate 834, and asparagine 836. One can recognise an MGS-like domain in the interval 925-1027; the sequence is TRVWSQKGSI…KDLYKKEVAS (103 aa). The interval 929–1030 is allosteric domain; the sequence is SQKGSIYLQN…YKKEVASCTQ (102 aa).

It belongs to the CarB family. Composed of two chains; the small (or glutamine) chain promotes the hydrolysis of glutamine to ammonia, which is used by the large (or ammonia) chain to synthesize carbamoyl phosphate. Tetramer of heterodimers (alpha,beta)4. The cofactor is Mg(2+). It depends on Mn(2+) as a cofactor.

The catalysed reaction is hydrogencarbonate + L-glutamine + 2 ATP + H2O = carbamoyl phosphate + L-glutamate + 2 ADP + phosphate + 2 H(+). It catalyses the reaction hydrogencarbonate + NH4(+) + 2 ATP = carbamoyl phosphate + 2 ADP + phosphate + 2 H(+). It participates in amino-acid biosynthesis; L-arginine biosynthesis; carbamoyl phosphate from bicarbonate: step 1/1. In terms of biological role, large subunit of the glutamine-dependent carbamoyl phosphate synthetase (CPSase). CPSase catalyzes the formation of carbamoyl phosphate from the ammonia moiety of glutamine, carbonate, and phosphate donated by ATP, constituting the first step of the biosynthetic pathway leading to arginine and/or urea. The large subunit (synthetase) binds the substrates ammonia (free or transferred from glutamine from the small subunit), hydrogencarbonate and ATP and carries out an ATP-coupled ligase reaction, activating hydrogencarbonate by forming carboxy phosphate which reacts with ammonia to form carbamoyl phosphate. The sequence is that of Carbamoyl phosphate synthase arginine-specific large chain from Bacillus subtilis (strain 168).